A 177-amino-acid chain; its full sequence is Peptidyl-prolyl cis-trans isomerase H (177 aa).

An N-acetylalanine modification is found at alanine 2. The region spanning 14–176 is the PPIase cyclophilin-type domain; the sequence is FFDVSIGGQE…LPVVISQCGE (163 aa).

This sequence belongs to the cyclophilin-type PPIase family. PPIase H subfamily. Interacts directly with PRPF4. Part of a heteromeric complex containing PPIH, PRPF3 and PRPF4 that is stable in the absence of RNA. Component of the U4/U6-U5 tri-snRNP complex composed of the U4, U6 and U5 snRNAs and at least PRPF3, PRPF4, PRPF6, PRPF8, PRPF31, SNRNP200, TXNL4A, SNRNP40, DDX23, CD2BP2, PPIH, SNU13, EFTUD2, SART1 and USP39. Heterodimer with PRPF18.

Its subcellular location is the nucleus speckle. It localises to the cytoplasm. It catalyses the reaction [protein]-peptidylproline (omega=180) = [protein]-peptidylproline (omega=0). Inhibited by cyclosporin A. Its function is as follows. PPIase that catalyzes the cis-trans isomerization of proline imidic peptide bonds in oligopeptides and may therefore assist protein folding. Participates in pre-mRNA splicing. May play a role in the assembly of the U4/U5/U6 tri-snRNP complex, one of the building blocks of the spliceosome. May act as a chaperone. The chain is Peptidyl-prolyl cis-trans isomerase H (PPIH) from Homo sapiens (Human).